We begin with the raw amino-acid sequence, 232 residues long: 2,3-bisphosphoglycerate-dependent phosphoglycerate mutase 1 (232 aa).

Residues 8 to 15 (RHGQSLWN), 21 to 22 (TG), arginine 58, 114 to 117 (ERYY), lysine 125, 141 to 142 (RR), and 185 to 186 (GN) contribute to the substrate site. The active-site Tele-phosphohistidine intermediate is histidine 9. Glutamate 114 serves as the catalytic Proton donor/acceptor.

Belongs to the phosphoglycerate mutase family. BPG-dependent PGAM subfamily.

It carries out the reaction (2R)-2-phosphoglycerate = (2R)-3-phosphoglycerate. The protein operates within carbohydrate degradation; glycolysis; pyruvate from D-glyceraldehyde 3-phosphate: step 3/5. Catalyzes the interconversion of 2-phosphoglycerate and 3-phosphoglycerate. The sequence is that of 2,3-bisphosphoglycerate-dependent phosphoglycerate mutase 1 from Gloeobacter violaceus (strain ATCC 29082 / PCC 7421).